The primary structure comprises 583 residues: Aspartyl protease APCB1 (583 aa).

Residues 83 to 103 (LVLGLLGISLLAVAFYASVFP) form a helical membrane-spanning segment. One can recognise a Peptidase A1 domain in the interval 203-564 (YYTRILVGKP…DNVKRRIGWM (362 aa)). Catalysis depends on residues aspartate 223 and aspartate 431.

This sequence belongs to the peptidase A1 family. Interacts with BAG6 and BAGP1.

It is found in the membrane. Functionally, involved in proteolytic processing of BAG6 and plant basal immunity. The polypeptide is Aspartyl protease APCB1 (Arabidopsis thaliana (Mouse-ear cress)).